A 257-amino-acid polypeptide reads, in one-letter code: Pimeloyl-[acyl-carrier protein] methyl ester esterase (257 aa).

Residues 15 to 241 form the AB hydrolase-1 domain; sequence HLVLLHGWGL…KAAHAPFVSH (227 aa). Substrate is bound by residues W22, 82–83, and 143–147; these read SL and FLALQ. The active-site Nucleophile is the S82. Active-site residues include D207 and H235. Position 235 (H235) interacts with substrate.

This sequence belongs to the AB hydrolase superfamily. Carboxylesterase BioH family. Monomer.

The protein localises to the cytoplasm. The enzyme catalyses 6-carboxyhexanoyl-[ACP] methyl ester + H2O = 6-carboxyhexanoyl-[ACP] + methanol + H(+). It functions in the pathway cofactor biosynthesis; biotin biosynthesis. In terms of biological role, the physiological role of BioH is to remove the methyl group introduced by BioC when the pimeloyl moiety is complete. It allows to synthesize pimeloyl-ACP via the fatty acid synthetic pathway through the hydrolysis of the ester bonds of pimeloyl-ACP esters. This is Pimeloyl-[acyl-carrier protein] methyl ester esterase from Klebsiella pneumoniae subsp. pneumoniae (strain ATCC 700721 / MGH 78578).